A 108-amino-acid chain; its full sequence is Nucleoid-associated protein PSHAa1202 (108 aa).

Disordered stretches follow at residues Met-1–Met-20 and Thr-87–Phe-108.

It belongs to the YbaB/EbfC family. As to quaternary structure, homodimer.

The protein resides in the cytoplasm. It is found in the nucleoid. In terms of biological role, binds to DNA and alters its conformation. May be involved in regulation of gene expression, nucleoid organization and DNA protection. This is Nucleoid-associated protein PSHAa1202 from Pseudoalteromonas translucida (strain TAC 125).